The primary structure comprises 334 residues: Immune-associated nucleotide-binding protein 3 (334 aa).

The AIG1-type G domain maps to 11–219 (KAVKNIVLVG…FRGKMYLEIK (209 aa)). Residues 20–27 (GRTGNGKS) are G1. Residues 20–28 (GRTGNGKSA) and Ser-41 contribute to the GTP site. A G2 region spans residues 47 to 51 (GVTKT). A G3 region spans residues 69 to 72 (DTPG). Residues 139 to 142 (TGGD) are G4. Residues 178-180 (NNM) form a G5 region. Residue Asn-179 participates in GTP binding. Residues 272 to 306 (SAAHERMVSMLNENLENAHRENIDLRKAHDHEQKK) are a coiled coil.

It belongs to the TRAFAC class TrmE-Era-EngA-EngB-Septin-like GTPase superfamily. AIG1/Toc34/Toc159-like paraseptin GTPase family. IAN subfamily. In terms of tissue distribution, mostly expressed in pollen. Also detected in lateral roots and radicles.

The polypeptide is Immune-associated nucleotide-binding protein 3 (Arabidopsis thaliana (Mouse-ear cress)).